Reading from the N-terminus, the 515-residue chain is Fatty acyl-CoA reductase 1 (515 aa).

Residues 1-465 (MVSIPEYYEG…ARKHLNKLRN (465 aa)) lie on the Cytoplasmic side of the membrane. The segment at 451 to 507 (SGLPAARKHLNKLRNIRYGFNTILVILIWRIFIARSQMARNIWYFVVSLCYKFLSYF) is necessary and sufficient for PEX19-mediated localization into peroxisome membrane. A helical membrane pass occupies residues 466–483 (IRYGFNTILVILIWRIFI). At 484–515 (ARSQMARNIWYFVVSLCYKFLSYFRASSTMRY) the chain is on the peroxisomal side.

It belongs to the fatty acyl-CoA reductase family. As to quaternary structure, interacts with PEX19; PEX19 mediates the targeting of FAR1 to peroxisomes. Widely expressed. Expressed in all tissues examined. Highest expression seen in preputial gland. Expressed in the brain where large quantities of ether lipids are synthesized.

Its subcellular location is the peroxisome membrane. It carries out the reaction a long-chain fatty acyl-CoA + 2 NADPH + 2 H(+) = a long-chain primary fatty alcohol + 2 NADP(+) + CoA. The enzyme catalyses hexadecanoyl-CoA + 2 NADPH + 2 H(+) = hexadecan-1-ol + 2 NADP(+) + CoA. It catalyses the reaction octadecanoyl-CoA + 2 NADPH + 2 H(+) = octadecan-1-ol + 2 NADP(+) + CoA. The catalysed reaction is (9Z)-octadecenoyl-CoA + 2 NADPH + 2 H(+) = (9Z)-octadecen-1-ol + 2 NADP(+) + CoA. It carries out the reaction (9Z,12Z)-octadecadienoyl-CoA + 2 NADPH + 2 H(+) = (9Z,12Z)-octadecadien-1-ol + 2 NADP(+) + CoA. The enzyme catalyses eicosanoyl-CoA + 2 NADPH + 2 H(+) = eicosan-1-ol + 2 NADP(+) + CoA. It catalyses the reaction 16-methylheptadecanoyl-CoA + 2 NADPH + 2 H(+) = 16-methylheptadecan-1-ol + 2 NADP(+) + CoA. The catalysed reaction is 18-methylnonadecanoyl-CoA + 2 NADPH + 2 H(+) = 18-methylnonadecan-1-ol + 2 NADP(+) + CoA. Its function is as follows. Catalyzes the reduction of saturated and unsaturated C16 or C18 fatty acyl-CoA to fatty alcohols. It plays an essential role in the production of ether lipids/plasmalogens which synthesis requires fatty alcohols. In parallel, it is also required for wax monoesters production since fatty alcohols also constitute a substrate for their synthesis. This chain is Fatty acyl-CoA reductase 1, found in Mus musculus (Mouse).